The sequence spans 745 residues: DNA ligase (745 aa).

The disordered stretch occupies residues 1 to 27 (MRNHGPGSERKDACVSAPDPTFSDDVP). Residues 57-61 (DAEYD), 106-107 (SL), and Glu135 contribute to the NAD(+) site. The active-site N6-AMP-lysine intermediate is Lys137. NAD(+) contacts are provided by Arg158 and Glu197. The tract at residues 216-235 (GKPPFANPRNAAAGSLRQKD) is disordered. Positions 313 and 337 each coordinate NAD(+). Zn(2+)-binding residues include Cys431, Cys434, Cys450, and Cys456. In terms of domain architecture, BRCT spans 649–738 (DGPRLLDGIT…PEAARAARLS (90 aa)).

Belongs to the NAD-dependent DNA ligase family. LigA subfamily. Mg(2+) is required as a cofactor. The cofactor is Mn(2+).

The enzyme catalyses NAD(+) + (deoxyribonucleotide)n-3'-hydroxyl + 5'-phospho-(deoxyribonucleotide)m = (deoxyribonucleotide)n+m + AMP + beta-nicotinamide D-nucleotide.. Its function is as follows. DNA ligase that catalyzes the formation of phosphodiester linkages between 5'-phosphoryl and 3'-hydroxyl groups in double-stranded DNA using NAD as a coenzyme and as the energy source for the reaction. It is essential for DNA replication and repair of damaged DNA. This Thermobifida fusca (strain YX) protein is DNA ligase.